Here is a 429-residue protein sequence, read N- to C-terminus: Adenylosuccinate synthetase (429 aa).

Residues 12–18 (GDEGKGK) and 40–42 (GHT) contribute to the GTP site. Residue Asp-13 is the Proton acceptor of the active site. The Mg(2+) site is built by Asp-13 and Gly-40. Residues 13–16 (DEGK), 38–41 (NAGH), Thr-128, Arg-142, Gln-223, Thr-238, and Arg-302 contribute to the IMP site. The active-site Proton donor is the His-41. 298–304 (TTTGRPR) provides a ligand contact to substrate. GTP contacts are provided by residues Arg-304, 330–332 (SID), and 412–414 (SVG).

It belongs to the adenylosuccinate synthetase family. As to quaternary structure, homodimer. Mg(2+) serves as cofactor.

It localises to the cytoplasm. The enzyme catalyses IMP + L-aspartate + GTP = N(6)-(1,2-dicarboxyethyl)-AMP + GDP + phosphate + 2 H(+). It functions in the pathway purine metabolism; AMP biosynthesis via de novo pathway; AMP from IMP: step 1/2. Its function is as follows. Plays an important role in the de novo pathway of purine nucleotide biosynthesis. Catalyzes the first committed step in the biosynthesis of AMP from IMP. In Bacillus cytotoxicus (strain DSM 22905 / CIP 110041 / 391-98 / NVH 391-98), this protein is Adenylosuccinate synthetase.